The chain runs to 312 residues: MGLLDSEPGSVLNAMSTAFNDTVEFYRWTWTIADKRVADWPLMQSPWPTISISTLYLLFVWLGPKWMKDREPFQMRLVLIIYNFGMVLLNLFIFRELFMGSYNAGYSYICQSVDYSNDVNEVRIAGALWWYFVSKGVEYLDTVFFILRKKNNQVSFLHVYHHCTMFTLWWIGIKWVAGGQAFFGAQMNSFIHVIMYSYYGLTAFGPWIQKYLWWKRYLTMLQLVQFHVTIGHTALSLYTDCPFPKWMHWALIAYAISFIFLFLNFYTRTYNEPKQSKTGKTATNGISSNGVNKSEKALENGKPQKNGKPKGE.

Asn-20 carries an N-linked (GlcNAc...) asparagine glycan. The next 7 helical transmembrane spans lie at 42 to 62 (LMQS…FVWL), 78 to 98 (VLII…RELF), 127 to 147 (ALWW…FFIL), 165 to 185 (MFTL…FFGA), 188 to 208 (NSFI…GPWI), 217 to 237 (YLTM…ALSL), and 246 to 266 (WMHW…LNFY). The segment covering 273–292 (PKQSKTGKTATNGISSNGVN) has biased composition (polar residues). Positions 273–312 (PKQSKTGKTATNGISSNGVNKSEKALENGKPQKNGKPKGE) are disordered. Asn-292 carries an N-linked (GlcNAc...) asparagine glycan. The Di-lysine motif motif lies at 308–312 (KPKGE).

It belongs to the ELO family. ELOVL4 subfamily. As to quaternary structure, oligomer. N-glycosylated. Expressed in the retina, exclusively in photoreceptor cells and in the brain, skin, testis and lens.

Its subcellular location is the endoplasmic reticulum membrane. It catalyses the reaction a very-long-chain acyl-CoA + malonyl-CoA + H(+) = a very-long-chain 3-oxoacyl-CoA + CO2 + CoA. The catalysed reaction is hexacosanoyl-CoA + malonyl-CoA + H(+) = 3-oxooctacosanyol-CoA + CO2 + CoA. It carries out the reaction octacosanoyl-CoA + malonyl-CoA + H(+) = 3-oxo-triacontanoyl-CoA + CO2 + CoA. The enzyme catalyses triacontanoyl-CoA + malonyl-CoA + H(+) = 3-oxo-dotriacontanoyl-CoA + CO2 + CoA. It catalyses the reaction (19Z,22Z,25Z,28Z,31Z)-tetratriacontapentaenoyl-CoA + malonyl-CoA + H(+) = 3-oxo-(21Z,24Z,27Z,30Z,33Z)-hexatriacontapentaenoyl-CoA + CO2 + CoA. The catalysed reaction is (4Z,7Z,10Z,13Z,16Z,19Z)-docosahexaenoyl-CoA + malonyl-CoA + H(+) = 3-oxo-(6Z,9Z,12Z,15Z,18Z,21Z)-tetracosahexaenoyl-CoA + CO2 + CoA. It carries out the reaction (7Z,10Z,13Z,16Z)-docosatetraenoyl-CoA + malonyl-CoA + H(+) = (9Z,12Z,15Z,18Z)-3-oxotetracosatetraenoyl-CoA + CO2 + CoA. The enzyme catalyses (11Z,14Z,17Z,20Z,23Z)-hexacosapentaenoyl-CoA + malonyl-CoA + H(+) = 3-oxo-(13Z,16Z,19Z,22Z,25Z)-octacosapentaenoyl-CoA + CO2 + CoA. It catalyses the reaction (13Z,16Z,19Z,22Z,25Z)-octacosapentaenoyl-CoA + malonyl-CoA + H(+) = 3-oxo-(15Z,18Z,21Z,24Z,27Z)-triacontapentaenoyl-CoA + CO2 + CoA. The catalysed reaction is (15Z,18Z,21Z,24Z,27Z)-triacontapentaenoyl-CoA + malonyl-CoA + H(+) = 3-oxo-(17Z,20Z,23Z,26Z,29Z)-dotriacontapentaenoyl-CoA + CO2 + CoA. It carries out the reaction (17Z,20Z,23Z,26Z,29Z)-dotriacontapentaenoyl-CoA + malonyl-CoA + H(+) = 3-oxo-(19Z,22Z,25Z,28Z,31Z)-tetratriacontapentaenoyl-CoA + CO2 + CoA. The enzyme catalyses (21Z,24Z,27Z,30Z,33Z)-hexatriacontapentaenoyl-CoA + malonyl-CoA + H(+) = 3-oxo-(23Z,26Z,29Z,32Z,35Z)-octatriacontapentaenoyl-CoA + CO2 + CoA. It catalyses the reaction (11Z,14Z,17Z,20Z)-hexacosatetraenoyl-CoA + malonyl-CoA + H(+) = (13Z,16Z,19Z,22Z)-3-oxooctacosatetraenoyl-CoA + CO2 + CoA. The catalysed reaction is (13Z,16Z,19Z,22Z)-octacosatetraenoyl-CoA + malonyl-CoA + H(+) = 3-oxo-(15Z,18Z,21Z,24Z)-triacontatetraenoyl-CoA + CO2 + CoA. It carries out the reaction (15Z,18Z,21Z,24Z)-triacontatetraenoyl-CoA + malonyl-CoA + H(+) = 3-oxo-(17Z,20Z,23Z,26Z)-dotriacontatetraenoyl-CoA + CO2 + CoA. The enzyme catalyses (17Z,20Z,23Z,26Z)-dotriacontatetraenoyl-CoA + malonyl-CoA + H(+) = 3-oxo-(19Z,22Z,25Z,28Z)-tetratriacontatetraenoyl-CoA + CO2 + CoA. It catalyses the reaction (19Z,22Z,25Z,28Z)-tetratriacontatetraenoyl-CoA + malonyl-CoA + H(+) = 3-oxo-(21Z,24Z,27Z,30Z)-hexatriacontatetraenoyl-CoA + CO2 + CoA. The catalysed reaction is (21Z,24Z,27Z,30Z)-hexatriacontatetraenoyl-CoA + malonyl-CoA + H(+) = 3-oxo-(23Z,26Z,29Z,32Z)-octatriacontatetraenoyl-CoA + CO2 + CoA. It carries out the reaction (6Z,9Z,12Z,15Z,18Z,21Z)-tetracosahexaenoyl-CoA + malonyl-CoA + H(+) = 3-oxo-(8Z,11Z,14Z,17Z,20Z,23Z)-hexacosahexaenoyl-CoA + CO2 + CoA. The enzyme catalyses (8Z,11Z,14Z,17Z,20Z,23Z)-hexacosahexaenoyl-CoA + malonyl-CoA + H(+) = 3-oxo-(10Z,13Z,16Z,19Z,22Z,25Z)-octacosahexaenoyl-CoA + CO2 + CoA. It catalyses the reaction (10Z,13Z,16Z,19Z,22Z,25Z)-octacosahexaenoyl-CoA + malonyl-CoA + H(+) = 3-oxo-(12Z,15Z,18Z,21Z,24Z,27Z)-triacontahexaenoyl-CoA + CO2 + CoA. The catalysed reaction is (12Z,15Z,18Z,21Z,24Z,27Z)-triacontahexaenoyl-CoA + malonyl-CoA + H(+) = 3-oxo-(14Z,17Z,20Z,23Z,26Z,29Z)-dotriacontahexaenoyl-CoA + CO2 + CoA. It carries out the reaction (14Z,17Z,20Z,23Z,26Z,29Z)-dotriacontahexaenoyl-CoA + malonyl-CoA + H(+) = 3-oxo-(16Z,19Z,22Z,25Z,28Z,31Z)-tetratriacontahexaenoyl-CoA + CO2 + CoA. The enzyme catalyses (16Z,19Z,22Z,25Z,28Z,31Z)-tetratriacontahexaenoyl-CoA + malonyl-CoA + H(+) = 3-oxo-(18Z,21Z,24Z,27Z,30Z,33Z)-hexatriacontahexaenoyl-CoA + CO2 + CoA. It catalyses the reaction (9Z,12Z,15Z,18Z,21Z)-tetracosapentaenoyl-CoA + malonyl-CoA + H(+) = 3-oxo-(11Z,14Z,17Z,20Z,23Z)-hexacosapentaenoyl-CoA + CO2 + CoA. It functions in the pathway lipid metabolism; fatty acid biosynthesis. Its function is as follows. Catalyzes the first and rate-limiting reaction of the four reactions that constitute the long-chain fatty acids elongation cycle. This endoplasmic reticulum-bound enzymatic process allows the addition of 2 carbons to the chain of long- and very long-chain fatty acids (VLCFAs) per cycle. Condensing enzyme that catalyzes the synthesis of very long chain saturated (VLC-SFA) and polyunsaturated (PUFA) fatty acids that are involved in multiple biological processes as precursors of membrane lipids and lipid mediators. May play a critical role in early brain and skin development. The polypeptide is Very long chain fatty acid elongase 4 (Mus musculus (Mouse)).